A 203-amino-acid polypeptide reads, in one-letter code: Outer-membrane lipoprotein carrier protein (203 aa).

The signal sequence occupies residues 1–20 (MRRGRVWLAALCLAAGAAHA).

Belongs to the LolA family. In terms of assembly, monomer.

Its subcellular location is the periplasm. Functionally, participates in the translocation of lipoproteins from the inner membrane to the outer membrane. Only forms a complex with a lipoprotein if the residue after the N-terminal Cys is not an aspartate (The Asp acts as a targeting signal to indicate that the lipoprotein should stay in the inner membrane). The protein is Outer-membrane lipoprotein carrier protein of Methylibium petroleiphilum (strain ATCC BAA-1232 / LMG 22953 / PM1).